We begin with the raw amino-acid sequence, 573 residues long: (R)-mandelonitrile lyase 3 (573 aa).

Residues 1 to 27 (MVKSTMSAVLLVLHIFVLHLQYSEVQS) form the signal peptide. N-linked (GlcNAc...) asparagine glycosylation is present at asparagine 30. 63–64 (TA) is a binding site for FAD. Asparagine 75 carries N-linked (GlcNAc...) asparagine glycosylation. FAD-binding positions include 82–83 (ER), valine 129, threonine 133, and 137–140 (NAGV). N-linked (GlcNAc...) asparagine glycans are attached at residues asparagine 145, asparagine 150, asparagine 162, and asparagine 218. Valine 244 serves as a coordination point for FAD. N-linked (GlcNAc...) asparagine glycans are attached at residues asparagine 252, asparagine 267, and asparagine 309. Residue cysteine 356 coordinates substrate. Asparagine 380, asparagine 402, asparagine 420, and asparagine 467 each carry an N-linked (GlcNAc...) asparagine glycan. Cysteine 427 and cysteine 478 are oxidised to a cystine. Tyrosine 485 lines the substrate pocket. FAD contacts are provided by residues 486-487 (WH) and glycine 515. The Proton donor role is filled by histidine 487. The active-site Proton acceptor is the histidine 525. 526–527 (PQ) is a binding site for FAD.

Belongs to the GMC oxidoreductase family. In terms of assembly, monomer. The cofactor is FAD.

It localises to the vacuole. Its subcellular location is the aleurone grain. It carries out the reaction (R)-mandelonitrile = benzaldehyde + hydrogen cyanide. Functionally, involved in cyanogenesis, the release of HCN from injured tissues. Catalyzes the stereospecific addition of HCN to a variety of aldehydes in vitro. It is a major seed constituent, and could have the additional role of a storage form for reduced nitrogen. This Prunus serotina (Black cherry) protein is (R)-mandelonitrile lyase 3 (MDL3).